Here is a 426-residue protein sequence, read N- to C-terminus: MWWLLVCVVIGGFYTAWNIGANDVANAVGPSVGAGVLTLRQAVLIAAVFEFLGAVVLGDRVIGTIESGLVAPADHVLSSQDYVFGMTAALFATGVWLQIASFFGWPVSTTHAIVGGVLGFGIILKEDAVIYWDSCARIFVSWLASPIIGGYFAFLIFSFIRKAILYKRDPVSAMVRIAPFLSAIIIFALGLILILSGAVARVVAFPVAFRVVCGLVVFAFAFTIWGVHFFKLAVLPQKVGPGTLLDRLLSKSTDYGRQYLVVERIFAYLQIVIACFMSFAHGSNDVANAIAPVAGIYRALYPQSYSPKVLFIFMSLGGLGLVFGLATWGWRVIDTIGKKITELTPSRGFSVGMSSAITIAAASAFGFPISTTHVVVGAVLGVGLARGLQAINLRIIKDIVLSWFVTVPAGAALSIMFFLLLRAVFC.

The next 11 membrane-spanning stretches (helical) occupy residues 1–21 (MWWL…NIGA), 37–57 (LTLR…AVVL), 83–103 (VFGM…ASFF), 104–124 (GWPV…GIIL), 140–160 (VSWL…FSFI), 183–203 (AIII…ARVV), 207–227 (VAFR…IWGV), 260–280 (LVVE…MSFA), 309–329 (VLFI…ATWG), 365–385 (FGFP…VGLA), and 399–419 (IVLS…MFFL).

This sequence belongs to the inorganic phosphate transporter (PiT) (TC 2.A.20) family.

The protein resides in the cell membrane. Functionally, potential transporter for phosphate. This is Putative phosphate permease TC_0064 from Chlamydia muridarum (strain MoPn / Nigg).